The chain runs to 500 residues: Na(+)/H(+) antiporter NhaB (500 aa).

The next 12 helical transmembrane spans lie at 34–54 (PLFF…EFIF), 62–82 (CYPL…GMTT), 90–110 (LVHN…IYFM), 129–149 (ALLG…LDAL), 150–170 (TVTA…HRVA), 205–225 (LLMH…VGEP), 241–261 (FFSK…VTCV), 311–331 (ILIV…LLVI), 350–370 (FKDA…VAVI), 394–414 (MLFI…VATI), 449–469 (VATP…IAPL), and 477–497 (MVWM…YAVS).

This sequence belongs to the NhaB Na(+)/H(+) (TC 2.A.34) antiporter family.

The protein resides in the cell inner membrane. It catalyses the reaction 2 Na(+)(in) + 3 H(+)(out) = 2 Na(+)(out) + 3 H(+)(in). Its function is as follows. Na(+)/H(+) antiporter that extrudes sodium in exchange for external protons. The sequence is that of Na(+)/H(+) antiporter NhaB from Pseudomonas fluorescens (strain ATCC BAA-477 / NRRL B-23932 / Pf-5).